The primary structure comprises 323 residues: NADH-cytochrome b5 reductase 2 (323 aa).

A helical membrane pass occupies residues 32–48 (LAPIYLGVGLIGLGVGL). The FAD-binding FR-type domain maps to 72–177 (QGWVDLKLAQ…KGPIPKYPWE (106 aa)). Residue 180 to 215 (KHKHICLIAGGTGITPMYQLARKIFKDPEDQTKVTL) participates in FAD binding.

It belongs to the flavoprotein pyridine nucleotide cytochrome reductase family. It depends on FAD as a cofactor.

The protein resides in the mitochondrion outer membrane. The enzyme catalyses 2 Fe(III)-[cytochrome b5] + NADH = 2 Fe(II)-[cytochrome b5] + NAD(+) + H(+). Functionally, may mediate the reduction of outer membrane cytochrome b5. The chain is NADH-cytochrome b5 reductase 2 (mcr1) from Aspergillus fumigatus (strain ATCC MYA-4609 / CBS 101355 / FGSC A1100 / Af293) (Neosartorya fumigata).